Here is a 310-residue protein sequence, read N- to C-terminus: tRNA-cytidine(32) 2-sulfurtransferase (310 aa).

The short motif at 48–53 (SGGKDS) is the PP-loop motif element. The [4Fe-4S] cluster site is built by cysteine 123, cysteine 126, and cysteine 214.

It belongs to the TtcA family. In terms of assembly, homodimer. Mg(2+) serves as cofactor. Requires [4Fe-4S] cluster as cofactor.

The protein localises to the cytoplasm. It catalyses the reaction cytidine(32) in tRNA + S-sulfanyl-L-cysteinyl-[cysteine desulfurase] + AH2 + ATP = 2-thiocytidine(32) in tRNA + L-cysteinyl-[cysteine desulfurase] + A + AMP + diphosphate + H(+). It participates in tRNA modification. Functionally, catalyzes the ATP-dependent 2-thiolation of cytidine in position 32 of tRNA, to form 2-thiocytidine (s(2)C32). The sulfur atoms are provided by the cysteine/cysteine desulfurase (IscS) system. The protein is tRNA-cytidine(32) 2-sulfurtransferase of Vibrio vulnificus (strain YJ016).